We begin with the raw amino-acid sequence, 249 residues long: DNA polymerase sliding clamp (249 aa).

The protein belongs to the PCNA family. Homotrimer. The subunits circularize to form a toroid; DNA passes through its center. Replication factor C (RFC) is required to load the toroid on the DNA.

Functionally, sliding clamp subunit that acts as a moving platform for DNA processing. Responsible for tethering the catalytic subunit of DNA polymerase and other proteins to DNA during high-speed replication. The chain is DNA polymerase sliding clamp from Pyrococcus horikoshii (strain ATCC 700860 / DSM 12428 / JCM 9974 / NBRC 100139 / OT-3).